Consider the following 60-residue polypeptide: Large ribosomal subunit protein bL32 (60 aa).

The span at 1–16 (MPNPKRRHSKKRTSTR) shows a compositional bias: basic residues. The disordered stretch occupies residues 1–28 (MPNPKRRHSKKRTSTRRAHDALKQPGLS).

It belongs to the bacterial ribosomal protein bL32 family.

The chain is Large ribosomal subunit protein bL32 from Solibacter usitatus (strain Ellin6076).